The chain runs to 344 residues: Cell adhesion molecule CEACAM6 (344 aa).

The first 34 residues, 1-34 (MGPPSAPPCRLHVPWKEVLLTASLLTFWNPPTTA), serve as a signal peptide directing secretion. The Ig-like V-type domain maps to 35-142 (KLTIESTPFN…EATGQFHVYP (108 aa)). N-linked (GlcNAc...) asparagine glycosylation is found at Asn-104, Asn-111, Asn-115, Asn-152, Asn-173, Asn-197, Asn-224, Asn-256, Asn-274, Asn-288, Asn-292, and Asn-309. Ig-like C2-type domains lie at 145–232 (PKPS…VTLN) and 240–314 (PTIS…TTVT). A disulfide bridge links Cys-167 with Cys-215. Residues Cys-259 and Cys-299 are joined by a disulfide bond. Gly-320 carries GPI-anchor amidated glycine lipidation. The propeptide at 321–344 (SAPVLSAVATVGITIGVLARVALI) is removed in mature form.

This sequence belongs to the immunoglobulin superfamily. CEA family. In terms of assembly, homodimer; homodimerizes via its Ig-like V-type domain. Heterodimer with CEACAM8; heterodimerizes via its Ig-like V-type domain. Glycosylated. As to expression, expressed in neutrophils. Expressed in columnar epithelial and goblet cells of the colon. Expressed in numerous tumor cell lines (at protein level).

It is found in the cell membrane. The protein resides in the apical cell membrane. It localises to the cell surface. Functionally, cell surface glycoprotein that plays a role in cell adhesion and tumor progression. Intercellular adhesion occurs in a calcium- and fibronectin-independent manner. Mediates homophilic and heterophilic cell adhesion with other carcinoembryonic antigen-related cell adhesion molecules, such as CEACAM5 and CEACAM8. Heterophilic interaction with CEACAM8 occurs in activated neutrophils. Plays a role in neutrophil adhesion to cytokine-activated endothelial cells. Plays a role in cell migration and cell adhesion to endothelial cells. This is Cell adhesion molecule CEACAM6 from Homo sapiens (Human).